The chain runs to 474 residues: Tubulin gamma-1 chain (474 aa).

142–148 (AGGTGSG) lines the GTP pocket.

Belongs to the tubulin family. In terms of assembly, gamma-tubulin complex is composed of gamma-tubulin and GCP proteins.

It is found in the cytoplasm. Its subcellular location is the cytoskeleton. The protein localises to the microtubule organizing center. It localises to the nucleus. The protein resides in the cell cortex. Functionally, tubulin is the major constituent of microtubules. The gamma chain is found at microtubule organizing centers (MTOC) such as the spindle poles, suggesting that it is involved in the minus-end nucleation of microtubule assembly. In terms of biological role, gamma-tubulin complex is essential for the control of microtubular network remodeling in the course of initiation and development of giant-feeding cells, and for the successful reproduction of nematodes (e.g. Meloidogyne spp.) in their plant hosts. This Arabidopsis thaliana (Mouse-ear cress) protein is Tubulin gamma-1 chain (TUBG1).